The following is a 148-amino-acid chain: uncharacterized protein (148 aa).

This sequence to A.tumefaciens Atu0565/AGR_C_992.

This is an uncharacterized protein from Rhizobium meliloti (strain 1021) (Ensifer meliloti).